Reading from the N-terminus, the 140-residue chain is Phosphoribosyl-AMP cyclohydrolase (140 aa).

Asp85 is a Mg(2+) binding site. Cys86 contributes to the Zn(2+) binding site. Mg(2+) contacts are provided by Asp87 and Asp89. Residues Cys102 and Cys109 each coordinate Zn(2+).

Belongs to the PRA-CH family. Homodimer. Mg(2+) is required as a cofactor. The cofactor is Zn(2+).

Its subcellular location is the cytoplasm. It catalyses the reaction 1-(5-phospho-beta-D-ribosyl)-5'-AMP + H2O = 1-(5-phospho-beta-D-ribosyl)-5-[(5-phospho-beta-D-ribosylamino)methylideneamino]imidazole-4-carboxamide. It functions in the pathway amino-acid biosynthesis; L-histidine biosynthesis; L-histidine from 5-phospho-alpha-D-ribose 1-diphosphate: step 3/9. In terms of biological role, catalyzes the hydrolysis of the adenine ring of phosphoribosyl-AMP. The chain is Phosphoribosyl-AMP cyclohydrolase from Bradyrhizobium diazoefficiens (strain JCM 10833 / BCRC 13528 / IAM 13628 / NBRC 14792 / USDA 110).